A 491-amino-acid polypeptide reads, in one-letter code: Nicotinamide phosphoribosyltransferase (491 aa).

At methionine 1 the chain carries N-acetylmethionine. Residue tyrosine 188 is modified to Phosphotyrosine. A diphosphate-binding site is contributed by arginine 196. A beta-nicotinamide D-ribonucleotide-binding site is contributed by aspartate 219. Diphosphate is bound by residues histidine 247 and arginine 311. Beta-nicotinamide D-ribonucleotide is bound by residues 311–313 (RPD), 353–354 (GD), glycine 384, and arginine 392. Serine 472 carries the post-translational modification Phosphoserine.

This sequence belongs to the NAPRTase family. As to quaternary structure, homodimer. Expressed in various tissues. At the highest level in liver and at the second highest in heart. The amount is higher in heart than in lung.

The protein resides in the nucleus. Its subcellular location is the cytoplasm. It localises to the secreted. It catalyses the reaction beta-nicotinamide D-ribonucleotide + diphosphate = 5-phospho-alpha-D-ribose 1-diphosphate + nicotinamide + H(+). It functions in the pathway cofactor biosynthesis; NAD(+) biosynthesis; nicotinamide D-ribonucleotide from 5-phospho-alpha-D-ribose 1-diphosphate and nicotinamide: step 1/1. Functionally, catalyzes the condensation of nicotinamide with 5-phosphoribosyl-1-pyrophosphate to yield nicotinamide mononucleotide, an intermediate in the biosynthesis of NAD. It is the rate limiting component in the mammalian NAD biosynthesis pathway. The secreted form behaves both as a cytokine with immunomodulating properties and an adipokine with anti-diabetic properties, it has no enzymatic activity, partly because of lack of activation by ATP, which has a low level in extracellular space and plasma. Plays a role in the modulation of circadian clock function. NAMPT-dependent oscillatory production of NAD regulates oscillation of clock target gene expression by releasing the core clock component: CLOCK-BMAL1 heterodimer from NAD-dependent SIRT1-mediated suppression. This Rattus norvegicus (Rat) protein is Nicotinamide phosphoribosyltransferase (Nampt).